Reading from the N-terminus, the 145-residue chain is D-aminoacyl-tRNA deacylase (145 aa).

The short motif at 137–138 is the Gly-cisPro motif, important for rejection of L-amino acids element; that stretch reads GP.

Belongs to the DTD family. Homodimer.

It localises to the cytoplasm. It catalyses the reaction glycyl-tRNA(Ala) + H2O = tRNA(Ala) + glycine + H(+). The enzyme catalyses a D-aminoacyl-tRNA + H2O = a tRNA + a D-alpha-amino acid + H(+). An aminoacyl-tRNA editing enzyme that deacylates mischarged D-aminoacyl-tRNAs. Also deacylates mischarged glycyl-tRNA(Ala), protecting cells against glycine mischarging by AlaRS. Acts via tRNA-based rather than protein-based catalysis; rejects L-amino acids rather than detecting D-amino acids in the active site. By recycling D-aminoacyl-tRNA to D-amino acids and free tRNA molecules, this enzyme counteracts the toxicity associated with the formation of D-aminoacyl-tRNA entities in vivo and helps enforce protein L-homochirality. The sequence is that of D-aminoacyl-tRNA deacylase from Shewanella frigidimarina (strain NCIMB 400).